A 34-amino-acid polypeptide reads, in one-letter code: Stromal 70 kDa heat shock-related protein, chloroplastic (34 aa).

It belongs to the heat shock protein 70 family.

The protein localises to the plastid. It is found in the chloroplast stroma. Functionally, interacts with newly imported chloroplast proteins to assist in their maturation. This Cucurbita maxima (Pumpkin) protein is Stromal 70 kDa heat shock-related protein, chloroplastic.